The following is a 481-amino-acid chain: Bifunctional protein HldE (481 aa).

The segment at 1–318 (MKVTLPDFRR…ENAIRGRAET (318 aa)) is ribokinase. 195-198 (NLSE) contacts ATP. The active site involves Asp-264. Positions 344-481 (MTNGIFDILH…KRRAGQRTVV (138 aa)) are cytidylyltransferase.

In the N-terminal section; belongs to the carbohydrate kinase PfkB family. The protein in the C-terminal section; belongs to the cytidylyltransferase family. As to quaternary structure, homodimer.

The catalysed reaction is D-glycero-beta-D-manno-heptose 7-phosphate + ATP = D-glycero-beta-D-manno-heptose 1,7-bisphosphate + ADP + H(+). It catalyses the reaction D-glycero-beta-D-manno-heptose 1-phosphate + ATP + H(+) = ADP-D-glycero-beta-D-manno-heptose + diphosphate. The protein operates within nucleotide-sugar biosynthesis; ADP-L-glycero-beta-D-manno-heptose biosynthesis; ADP-L-glycero-beta-D-manno-heptose from D-glycero-beta-D-manno-heptose 7-phosphate: step 1/4. It functions in the pathway nucleotide-sugar biosynthesis; ADP-L-glycero-beta-D-manno-heptose biosynthesis; ADP-L-glycero-beta-D-manno-heptose from D-glycero-beta-D-manno-heptose 7-phosphate: step 3/4. In terms of biological role, catalyzes the phosphorylation of D-glycero-D-manno-heptose 7-phosphate at the C-1 position to selectively form D-glycero-beta-D-manno-heptose-1,7-bisphosphate. Catalyzes the ADP transfer from ATP to D-glycero-beta-D-manno-heptose 1-phosphate, yielding ADP-D-glycero-beta-D-manno-heptose. In Sodalis glossinidius (strain morsitans), this protein is Bifunctional protein HldE.